A 178-amino-acid chain; its full sequence is MARTKHRVTRSQPRNQTDAAGASSSQAAGPTTTPTRRGGEGGDNTQQTNPTTSPATGTRRGAKRSRQAMPRGSQKKSYRYRPGTVALKEIRHFQKQTNLLIPAASFIREVRSITHMLAPPQINRWTAEALVALQEAAEDYLVGLFSDSMLCAIHARRVTLMRKDFELARRLGGKGRPW.

Positions 1-81 (MARTKHRVTR…GSQKKSYRYR (81 aa)) are disordered. Position 5 is an N6,N6,N6-trimethyllysine; alternate (lysine 5). Lysine 5 carries the post-translational modification N6,N6-dimethyllysine; alternate. Lysine 5 bears the N6-methyllysine; alternate mark. Phosphoserine is present on serine 11. The span at 16-36 (QTDAAGASSSQAAGPTTTPTR) shows a compositional bias: low complexity. A compositionally biased stretch (polar residues) spans 43–56 (DNTQQTNPTTSPAT). An N6-methyllysine; alternate mark is found at lysine 63 and lysine 75. Residue lysine 63 is modified to N6-acetyllysine; alternate. The residue at position 75 (lysine 75) is an N6,N6,N6-trimethyllysine; alternate. Residue lysine 75 is modified to N6,N6-dimethyllysine; alternate.

It belongs to the histone H3 family. As to quaternary structure, forms a nucleosome-like histone octamer containing two molecules each of H2A, H2B, CENH3 and H4 assembled in one CENH3-H4 heterotetramer and two H2A-H2B heterodimers. Interacts with ORTH2.

Its subcellular location is the chromosome. It localises to the centromere. The protein localises to the kinetochore. In terms of biological role, histone H3-like variant which exclusively replaces conventional H3 in the nucleosome core of centromeric chromatin at the inner plate of the kinetochore. Required for recruitment and assembly of kinetochore proteins, mitotic progression and chromosome segregation. May serve as an epigenetic mark that propagates centromere identity through replication and cell division. This chain is Histone H3-like centromeric protein CENH3, found in Arabidopsis thaliana (Mouse-ear cress).